The following is a 431-amino-acid chain: Asparagine--tRNA ligase (431 aa).

The protein belongs to the class-II aminoacyl-tRNA synthetase family.

It localises to the cytoplasm. The enzyme catalyses tRNA(Asn) + L-asparagine + ATP = L-asparaginyl-tRNA(Asn) + AMP + diphosphate + H(+). In Thermococcus kodakarensis (strain ATCC BAA-918 / JCM 12380 / KOD1) (Pyrococcus kodakaraensis (strain KOD1)), this protein is Asparagine--tRNA ligase.